We begin with the raw amino-acid sequence, 302 residues long: Pantothenate synthetase 4 (302 aa).

Residue 51–58 (MGALHEGH) participates in ATP binding. His58 serves as the catalytic Proton donor. Gln82 serves as a coordination point for (R)-pantoate. Position 82 (Gln82) interacts with beta-alanine. 166 to 169 (GRKD) contributes to the ATP binding site. Gln172 is a (R)-pantoate binding site. ATP contacts are provided by residues Ala195 and 203–206 (RSSR).

The protein belongs to the pantothenate synthetase family. Homodimer.

It is found in the cytoplasm. The enzyme catalyses (R)-pantoate + beta-alanine + ATP = (R)-pantothenate + AMP + diphosphate + H(+). It participates in cofactor biosynthesis; (R)-pantothenate biosynthesis; (R)-pantothenate from (R)-pantoate and beta-alanine: step 1/1. In terms of biological role, catalyzes the condensation of pantoate with beta-alanine in an ATP-dependent reaction via a pantoyl-adenylate intermediate. The protein is Pantothenate synthetase 4 of Frankia alni (strain DSM 45986 / CECT 9034 / ACN14a).